Reading from the N-terminus, the 345-residue chain is Microtubule-associated protein Jupiter (345 aa).

The span at Met1–Ser14 shows a compositional bias: polar residues. Residues Met1 to Gln34 form a disordered region. Ser24 carries the phosphoserine modification. Residue Thr35 is modified to Phosphothreonine. The span at Gln78–Leu87 shows a compositional bias: basic and acidic residues. The disordered stretch occupies residues Gln78–Asn100. Phosphothreonine is present on residues Thr92 and Thr96. Phosphoserine occurs at positions 105, 134, and 145. 2 disordered regions span residues His127 to Ser241 and Glu300 to Trp345. A compositionally biased stretch (low complexity) spans Ser132–Ser145. Over residues Thr146–Thr164 the composition is skewed to polar residues. Residues Leu177 to Pro191 show a composition bias toward pro residues. Composition is skewed to polar residues over residues Asp212–Cys226 and Asp315–Gly326.

The protein belongs to the MAP Jupiter family.

The protein localises to the nucleus. Its subcellular location is the cytoplasm. The protein resides in the cytoskeleton. It localises to the spindle. Functionally, binds to all microtubule populations. This is Microtubule-associated protein Jupiter from Drosophila erecta (Fruit fly).